Reading from the N-terminus, the 529-residue chain is MCTPDENDYKTSTDPDTSANTNHTLEKKKRKKRKNTNVACVNCSRLHVSCEAKRPCLRCISKGLTATCVDAPRKKSKYLAGIPNRELPMNIQPDLPPRKIMIPIYNNSSNSSLNVNNMGEQQKFTSPQHIVHKAKFLSNAADSEYSILSNIIYQDTLSNKIPIDILYSNTNSTSNSTIGNSSNNSPTGTNTSPEETEMEKIRQLYSEQRANIPPHPYPSSNQNVYSILLGPNSAKIVASQVNLFANHFPLVPVDSADNSLNFKRLLPRDPSEKSSQINWDSSINQYYLNSETVTFPELAIPLKRRKNHLVSVSLESCSPDAANIKSNVEWEHSLRYSTPMEIYTSINAPFSHTPGFHHLLVYLKHRFNQQDLVKMCRSIAEFRPIFIACSVTLTEEDMIFMEQCYQRTLLEYVKFIAQIGTPTCIWRRNGQISYVNEEFEILCGWTREELLNKMTFIVEIMDDESVRDYFKTLSKVAYRDFRGSEKMKVCRLLSPIKGKIIHCCCMWTLKRDVSGLPLMILGNFMPILN.

Residues 1–31 are disordered; sequence MCTPDENDYKTSTDPDTSANTNHTLEKKKRK. Residues 14–23 are compositionally biased toward polar residues; it reads DPDTSANTNH. The zn(2)-C6 fungal-type DNA-binding region spans 40–68; sequence CVNCSRLHVSCEAKRPCLRCISKGLTATC. Residues 174–193 are compositionally biased toward low complexity; the sequence is SNSTIGNSSNNSPTGTNTSP. The interval 174-198 is disordered; sequence SNSTIGNSSNNSPTGTNTSPEETEM. One can recognise a PAS domain in the interval 408-480; it reads TLLEYVKFIA…KTLSKVAYRD (73 aa).

Belongs to the ERT1/acuK family.

Its subcellular location is the cytoplasm. The protein localises to the nucleus. Transcription factor which regulates nonfermentable carbon utilization. Activator of gluconeogenetic genes like PCK1. Involved in restriction of Ty1 transposition. This Saccharomyces cerevisiae (strain ATCC 204508 / S288c) (Baker's yeast) protein is Transcription activator of gluconeogenesis ERT1 (ERT1).